The chain runs to 196 residues: Imidazole glycerol phosphate synthase subunit HisH (196 aa).

Residues 2–196 enclose the Glutamine amidotransferase type-1 domain; sequence DVVILDTGCA…AQLMKNFLEM (195 aa). The active-site Nucleophile is the C77. Residues H178 and E180 contribute to the active site.

Heterodimer of HisH and HisF.

The protein localises to the cytoplasm. The catalysed reaction is 5-[(5-phospho-1-deoxy-D-ribulos-1-ylimino)methylamino]-1-(5-phospho-beta-D-ribosyl)imidazole-4-carboxamide + L-glutamine = D-erythro-1-(imidazol-4-yl)glycerol 3-phosphate + 5-amino-1-(5-phospho-beta-D-ribosyl)imidazole-4-carboxamide + L-glutamate + H(+). It catalyses the reaction L-glutamine + H2O = L-glutamate + NH4(+). It functions in the pathway amino-acid biosynthesis; L-histidine biosynthesis; L-histidine from 5-phospho-alpha-D-ribose 1-diphosphate: step 5/9. Its function is as follows. IGPS catalyzes the conversion of PRFAR and glutamine to IGP, AICAR and glutamate. The HisH subunit catalyzes the hydrolysis of glutamine to glutamate and ammonia as part of the synthesis of IGP and AICAR. The resulting ammonia molecule is channeled to the active site of HisF. The chain is Imidazole glycerol phosphate synthase subunit HisH from Yersinia pestis.